The sequence spans 264 residues: Undecaprenyl-diphosphatase (264 aa).

8 consecutive transmembrane segments (helical) span residues 1–21 (MTVF…FLPI), 40–60 (GLTF…AFFW), 81–101 (MFWY…LLEE), 109–129 (TPLL…WADA), 140–160 (ISMA…IPGV), 183–203 (FSFL…LKDI), 211–231 (AFIT…SFLL), and 239–259 (FALF…LAAA).

Belongs to the UppP family.

The protein resides in the cell membrane. The enzyme catalyses di-trans,octa-cis-undecaprenyl diphosphate + H2O = di-trans,octa-cis-undecaprenyl phosphate + phosphate + H(+). Catalyzes the dephosphorylation of undecaprenyl diphosphate (UPP). Confers resistance to bacitracin. The protein is Undecaprenyl-diphosphatase of Pelotomaculum thermopropionicum (strain DSM 13744 / JCM 10971 / SI).